A 261-amino-acid polypeptide reads, in one-letter code: UPF0328 protein ECU06_0100 (261 aa).

This sequence belongs to the UPF0328 family.

The sequence is that of UPF0328 protein ECU06_0100 from Encephalitozoon cuniculi (strain GB-M1) (Microsporidian parasite).